The sequence spans 365 residues: Methylthioribose-1-phosphate isomerase (365 aa).

The active-site Proton donor is D255.

It belongs to the eIF-2B alpha/beta/delta subunits family. MtnA subfamily.

It localises to the cytoplasm. The protein resides in the nucleus. It carries out the reaction 5-(methylsulfanyl)-alpha-D-ribose 1-phosphate = 5-(methylsulfanyl)-D-ribulose 1-phosphate. It functions in the pathway amino-acid biosynthesis; L-methionine biosynthesis via salvage pathway; L-methionine from S-methyl-5-thio-alpha-D-ribose 1-phosphate: step 1/6. In terms of biological role, catalyzes the interconversion of methylthioribose-1-phosphate (MTR-1-P) into methylthioribulose-1-phosphate (MTRu-1-P). This chain is Methylthioribose-1-phosphate isomerase, found in Drosophila willistoni (Fruit fly).